Here is a 753-residue protein sequence, read N- to C-terminus: MNPYQNNDEIVDVPENYDNNLNRYPYANDPNVAMQNTNYKDWMNGYEEINPSSITAILASIGILNRVIALTGVLGNTQEVISIIQDALGFIRNGTGNELLIHVEQLIQQTLATQYRSAATGAIYGISRSYDNYLMFFRQWERNRTRENGQQVESAFTTINTLCINALAPQASLSRRGFETLLLPNYAMAANFHLLLLRDAVLYRNQWLSNSISTANVNLNILRAAINEYITHCTRWYQDGLNRFDRSSRANMNEWRRFNAYRRDMTLSVLDFATVFPTYDPVLFPAATNVELTRVVYTDPIVMAGGRTAIPGFTRMENLVNSASRVSFLNQMNIYTSFYFRPHNIPRYYWSGNQNFLSNGTSNLYGYRSDGRTTFNVSNIDIFRVNMTTHIGGAFTDDYRGLHRAEFIGANTQNNQRTSLLYSVEIPSSHFRFENHTVFLPGESGLEPNERNYTHRLFQMMNEVSVNPNARGRVFLHAWTHRSLRRTNGLRSDQILQIPAVKTISNGGDRAVVLNYGENIMKLDNLTTGLSYKLTAVDSEASNTRFIVRVRYASMNNNKLNLVLNGAQIASLNVEHTVQRGGSLTDLQYGNFKYATFAGNFKMGSQSILGIFKEIPNIDFVLDKIELIPSNFMSSLEQTQNYNTYNQDTIYTHNQGYDTYDQNSSGMYHQSYNNYDQNMDTTYQPSYDNYNQNASGTYDDGYNPNASDSYDQSYTNNYSQNTNSMYDQGYYNNNYDQHSGCTCNQGYDNNYLK.

The segment covering 680–696 (DTTYQPSYDNYNQNASG) has biased composition (polar residues). Residues 680–721 (DTTYQPSYDNYNQNASGTYDDGYNPNASDSYDQSYTNNYSQN) form a disordered region. Residues 712-721 (QSYTNNYSQN) are compositionally biased toward low complexity.

Belongs to the delta endotoxin family. Post-translationally, has low mosquitocidal activity probably due to rapid proteolysis to inactive 56 kDa and 43 kDa proteins.

Promotes colloidosmotic lysis by binding to the midgut epithelial cells of mosquitos. Active against Aedes aegypti and Culex quinquefasciatus larvae. This is Pesticidal crystal protein Cry20Aa (cry20Aa) from Bacillus thuringiensis subsp. fukuokaensis.